We begin with the raw amino-acid sequence, 63 residues long: Cecropin-A1 (63 aa).

An N-terminal signal peptide occupies residues 1–19 (MNFYNIFVFVALILAITIG). Arginine 62 carries the arginine amide modification.

The protein belongs to the cecropin family.

The protein resides in the secreted. Its function is as follows. Cecropins have lytic and antibacterial activity against several Gram-positive and Gram-negative bacteria. The chain is Cecropin-A1 (CecA1) from Drosophila simulans (Fruit fly).